A 333-amino-acid chain; its full sequence is Probable tRNA pseudouridine synthase B (333 aa).

Residue aspartate 66 is the Nucleophile of the active site. The 76-residue stretch at 233 to 308 (LKKIIIKDSA…EVVEITRVIM (76 aa)) folds into the PUA domain.

This sequence belongs to the pseudouridine synthase TruB family. Type 2 subfamily.

It carries out the reaction uridine(55) in tRNA = pseudouridine(55) in tRNA. Could be responsible for synthesis of pseudouridine from uracil-55 in the psi GC loop of transfer RNAs. The polypeptide is Probable tRNA pseudouridine synthase B (Methanococcus maripaludis (strain DSM 14266 / JCM 13030 / NBRC 101832 / S2 / LL)).